A 209-amino-acid chain; its full sequence is Large ribosomal subunit protein uL3 (209 aa).

The interval 128–163 (FGGGSRTHGQSDRLRAPGSVGGSSDPSRTFRGTRMA) is disordered.

The protein belongs to the universal ribosomal protein uL3 family. Part of the 50S ribosomal subunit. Forms a cluster with proteins L14 and L19.

Its function is as follows. One of the primary rRNA binding proteins, it binds directly near the 3'-end of the 23S rRNA, where it nucleates assembly of the 50S subunit. The protein is Large ribosomal subunit protein uL3 of Chlorobium phaeobacteroides (strain DSM 266 / SMG 266 / 2430).